Consider the following 463-residue polypeptide: Ribosomal protein uS12 methylthiotransferase RimO (463 aa).

The region spanning 15 to 130 is the MTTase N-terminal domain; the sequence is PKVGMVSLGC…VMQVVHSHLP (116 aa). [4Fe-4S] cluster contacts are provided by C24, C60, C89, C161, C165, and C168. The Radical SAM core domain maps to 147–392; the sequence is LTPRHYAYLK…MEVAEEVSAA (246 aa). The TRAM domain maps to 395–463; that stretch reads ERKVGKTLKV…ADGHDLWGEV (69 aa).

Belongs to the methylthiotransferase family. RimO subfamily. [4Fe-4S] cluster is required as a cofactor.

The protein localises to the cytoplasm. It catalyses the reaction L-aspartate(89)-[ribosomal protein uS12]-hydrogen + (sulfur carrier)-SH + AH2 + 2 S-adenosyl-L-methionine = 3-methylsulfanyl-L-aspartate(89)-[ribosomal protein uS12]-hydrogen + (sulfur carrier)-H + 5'-deoxyadenosine + L-methionine + A + S-adenosyl-L-homocysteine + 2 H(+). Catalyzes the methylthiolation of an aspartic acid residue of ribosomal protein uS12. The sequence is that of Ribosomal protein uS12 methylthiotransferase RimO from Burkholderia thailandensis (strain ATCC 700388 / DSM 13276 / CCUG 48851 / CIP 106301 / E264).